We begin with the raw amino-acid sequence, 114 residues long: Hydrogenase maturation factor HypA (114 aa).

Residue histidine 2 participates in Ni(2+) binding. Residues cysteine 73, cysteine 76, cysteine 89, and cysteine 92 each coordinate Zn(2+).

It belongs to the HypA/HybF family.

Its function is as follows. Involved in the maturation of [NiFe] hydrogenases. Required for nickel insertion into the metal center of the hydrogenase. This Psychromonas ingrahamii (strain DSM 17664 / CCUG 51855 / 37) protein is Hydrogenase maturation factor HypA.